A 195-amino-acid polypeptide reads, in one-letter code: Thioredoxin reductase-like selenoprotein T (195 aa).

The signal sequence occupies residues 1–19 (MRLLLLLLVAASAVVRSEA). The segment at residues 46–49 (CVSU) is a cross-link (cysteinyl-selenocysteine (Cys-Sec)). A non-standard amino acid (selenocysteine) is located at residue Sec49. The chain crosses the membrane as a helical span at residues 85-103 (IASFLSVFKLVLIGLIIVG).

Belongs to the SelWTH family. Selenoprotein T subfamily. In terms of processing, may contain a selenide-sulfide bond between Cys-46 and Sec-49. This bond is speculated to serve as redox-active pair. In terms of tissue distribution, ubiquitous. Highly expressed in the endocrine pancreas. Expressed at low levels in the adult brain.

It is found in the endoplasmic reticulum membrane. It carries out the reaction [thioredoxin]-dithiol + NADP(+) = [thioredoxin]-disulfide + NADPH + H(+). Its function is as follows. Selenoprotein with thioredoxin reductase-like oxidoreductase activity. Protects dopaminergic neurons against oxidative stress and cell death. Involved in ADCYAP1/PACAP-induced calcium mobilization and neuroendocrine secretion. Plays a role in fibroblast anchorage and redox regulation. In gastric smooth muscle, modulates the contraction processes through the regulation of calcium release and MYLK activation. In pancreatic islets, involved in the control of glucose homeostasis, contributes to prolonged ADCYAP1/PACAP-induced insulin secretion. This Mus musculus (Mouse) protein is Thioredoxin reductase-like selenoprotein T.